The chain runs to 459 residues: Flavin-containing monooxygenase FMO GS-OX5 (459 aa).

FAD is bound at residue 17–22 (GAGAAG). 212–217 (GNFASG) serves as a coordination point for NADP(+).

Belongs to the FMO family.

It carries out the reaction a (Z)-omega-(methylsulfanyl)-N-sulfo-alkylhydroximate S-glucoside + NADPH + O2 + H(+) = a (Z)-omega-(methylsulfinyl)-alkyl-glucosinolate + NADP(+) + H2O. Its function is as follows. Catalyzes the conversion of methylthioalkyl glucosinolates into methylsulfinylalkyl glucosinolates. Specific for 8-methylthiooctyl (8-MTO) glucosinolates. This chain is Flavin-containing monooxygenase FMO GS-OX5 (FMOGS-OX5), found in Arabidopsis thaliana (Mouse-ear cress).